Reading from the N-terminus, the 271-residue chain is Tryptophan synthase alpha chain (271 aa).

Active-site proton acceptor residues include E56 and D67.

Belongs to the TrpA family. As to quaternary structure, tetramer of two alpha and two beta chains.

The catalysed reaction is (1S,2R)-1-C-(indol-3-yl)glycerol 3-phosphate + L-serine = D-glyceraldehyde 3-phosphate + L-tryptophan + H2O. It participates in amino-acid biosynthesis; L-tryptophan biosynthesis; L-tryptophan from chorismate: step 5/5. Its function is as follows. The alpha subunit is responsible for the aldol cleavage of indoleglycerol phosphate to indole and glyceraldehyde 3-phosphate. The protein is Tryptophan synthase alpha chain of Mycobacterium avium (strain 104).